Reading from the N-terminus, the 245-residue chain is Homeobox protein goosecoid (245 aa).

A DNA-binding region (homeobox) is located at residues 150-209; the sequence is KRRHRTIFTDEQLEALENLFQETKYPDVGTREQLARKVHLREEKVEVWFKNRRAKWRRQK. The interval 203 to 245 is disordered; that stretch reads AKWRRQKRSSSEESENAQKWNKASKTSPEKRQEDGKSDLDSDS. The segment covering 219-228 has biased composition (polar residues); sequence AQKWNKASKT. Positions 229 to 245 are enriched in basic and acidic residues; that stretch reads SPEKRQEDGKSDLDSDS.

Belongs to the paired homeobox family. Bicoid subfamily.

The protein localises to the nucleus. Functionally, involved in the development of the organizer region in the gastrula (Hensen node in chicken). In Gallus gallus (Chicken), this protein is Homeobox protein goosecoid (GSC).